A 248-amino-acid polypeptide reads, in one-letter code: Ankyrin repeat domain-containing protein 45 (248 aa).

Acidic residues-rich tracts occupy residues methionine 1–glutamate 10 and glutamate 22–glycine 33. The interval methionine 1–threonine 42 is disordered. 2 ANK repeats span residues valine 75–glutamate 104 and arginine 108–alanine 137.

Its subcellular location is the cytoplasm. The protein localises to the midbody. It is found in the midbody ring. It localises to the cleavage furrow. Its function is as follows. May play a role during cell division. This is Ankyrin repeat domain-containing protein 45 (Ankrd45) from Mus musculus (Mouse).